Here is a 201-residue protein sequence, read N- to C-terminus: 3-isopropylmalate dehydratase small subunit (201 aa).

Belongs to the LeuD family. LeuD type 1 subfamily. In terms of assembly, heterodimer of LeuC and LeuD.

It carries out the reaction (2R,3S)-3-isopropylmalate = (2S)-2-isopropylmalate. It functions in the pathway amino-acid biosynthesis; L-leucine biosynthesis; L-leucine from 3-methyl-2-oxobutanoate: step 2/4. Its function is as follows. Catalyzes the isomerization between 2-isopropylmalate and 3-isopropylmalate, via the formation of 2-isopropylmaleate. In Shewanella frigidimarina (strain NCIMB 400), this protein is 3-isopropylmalate dehydratase small subunit.